Consider the following 252-residue polypeptide: MMLHAQHMPGQPGTPSLVFLHGFSGDCREWQPVGEQFHGCSRLNIDLPGHGGSAAIPVGGFADVIRLLRATLISYNILKFWLVGYSLGDRVQMIASCQGIPGLCGLVVEGGHPGLQNEQARAERRLSDGRWAERFRHEPLTEVFHDWYQQPVFASLTAQQRQALTALRSQNNGETLAAMLEATSLAVQPDLREVLNALAFPFYYLCGERDSKFRALAQEVAATCHVIRNAGHNAHRENPAGVVDSLAQILRL.

The protein belongs to the AB hydrolase superfamily. MenH family. Monomer.

The catalysed reaction is 5-enolpyruvoyl-6-hydroxy-2-succinyl-cyclohex-3-ene-1-carboxylate = (1R,6R)-6-hydroxy-2-succinyl-cyclohexa-2,4-diene-1-carboxylate + pyruvate. The protein operates within quinol/quinone metabolism; 1,4-dihydroxy-2-naphthoate biosynthesis; 1,4-dihydroxy-2-naphthoate from chorismate: step 3/7. Its pathway is quinol/quinone metabolism; menaquinone biosynthesis. In terms of biological role, catalyzes a proton abstraction reaction that results in 2,5-elimination of pyruvate from 2-succinyl-5-enolpyruvyl-6-hydroxy-3-cyclohexene-1-carboxylate (SEPHCHC) and the formation of 2-succinyl-6-hydroxy-2,4-cyclohexadiene-1-carboxylate (SHCHC). The protein is 2-succinyl-6-hydroxy-2,4-cyclohexadiene-1-carboxylate synthase of Salmonella typhi.